We begin with the raw amino-acid sequence, 185 residues long: Elongation factor P (185 aa).

It belongs to the elongation factor P family.

The protein localises to the cytoplasm. It participates in protein biosynthesis; polypeptide chain elongation. In terms of biological role, involved in peptide bond synthesis. Stimulates efficient translation and peptide-bond synthesis on native or reconstituted 70S ribosomes in vitro. Probably functions indirectly by altering the affinity of the ribosome for aminoacyl-tRNA, thus increasing their reactivity as acceptors for peptidyl transferase. In Picosynechococcus sp. (strain ATCC 27264 / PCC 7002 / PR-6) (Agmenellum quadruplicatum), this protein is Elongation factor P.